A 783-amino-acid polypeptide reads, in one-letter code: Ubiquitin carboxyl-terminal hydrolase 1 (783 aa).

2 disordered regions span residues 1–22 (MPGV…KKNR) and 34–55 (KRAL…YKGS). The span at 7 to 16 (SESNGLSRGS) shows a compositional bias: polar residues. 2 positions are modified to phosphoserine: Ser16 and Ser42. The span at 45-55 (NEEKTSEYKGS) shows a compositional bias: basic and acidic residues. Position 67 is a phosphoserine (Ser67). Positions 81–783 (VGLNNLGNTC…TPYLLFYKKL (703 aa)) constitute a USP domain. Cys90 (nucleophile) is an active-site residue. Positions 234 to 311 (EEYQKEEMSD…RKAAGDTLEI (78 aa)) are disordered. Basic and acidic residues-rich tracts occupy residues 250-273 (DNMR…KSDA) and 284-296 (ISKE…ENQR). A Phosphoserine modification is found at Ser473. Residue His591 is the Proton acceptor of the active site. A disordered region spans residues 685-722 (PDKVASTALPENRNSETNNTNGTDESDSNKESSDQTGI). The residue at position 766 (Ser766) is a Phosphoserine.

The protein belongs to the peptidase C19 family. In terms of assembly, interacts with FANCD2 and PCNA. Interacts with WDR48. Interacts with ATAD5; the interaction regulates USP1-mediated PCNA deubiquitination. In terms of processing, autocatalytic cleavage of USP1 following UV irradiation inactivates it, leading to an increase in ubiquitinated PCNA, recruitment of POLH and translesion synthesis. Ubiquitinated by the CRL2(KLHDC2) complex following autocatalytic cleavage, leading to its degradation: the CRL2(KLHDC2) complex recognizes the diglycine (Gly-Gly) at the C-terminus.

It is found in the nucleus. The catalysed reaction is Thiol-dependent hydrolysis of ester, thioester, amide, peptide and isopeptide bonds formed by the C-terminal Gly of ubiquitin (a 76-residue protein attached to proteins as an intracellular targeting signal).. In terms of biological role, negative regulator of DNA damage repair which specifically deubiquitinates monoubiquitinated FANCD2. Also involved in PCNA-mediated translesion synthesis (TLS) by deubiquitinating monoubiquitinated PCNA. Has almost no deubiquitinating activity by itself and requires the interaction with WDR48 to have a high activity. The chain is Ubiquitin carboxyl-terminal hydrolase 1 from Bos taurus (Bovine).